The primary structure comprises 365 residues: Centrosomal protein of 41 kDa B (365 aa).

Positions 1–14 (MSAKRSIGDPEILK) are enriched in basic and acidic residues. Disordered stretches follow at residues 1 to 23 (MSAK…NQKY) and 104 to 123 (EFLT…SKSP). A Rhodanese domain is found at 177–274 (EDCPFLLLDV…ISQKFPQGLT (98 aa)). Positions 329–365 (TSTPSRLRLDSRNSKVPSSASSARSLSSTSSHSKPWK) are disordered. Residues 342–365 (SKVPSSASSARSLSSTSSHSKPWK) are compositionally biased toward low complexity.

The protein belongs to the CEP41 family.

Its subcellular location is the cytoplasm. The protein localises to the cytoskeleton. The protein resides in the microtubule organizing center. It localises to the centrosome. It is found in the cell projection. Its subcellular location is the cilium. The protein localises to the cilium basal body. In terms of biological role, required during ciliogenesis for tubulin glutamylation in cilium. Probably acts by participating in the transport of tubulin polyglutamylases between the basal body and the cilium. This Xenopus laevis (African clawed frog) protein is Centrosomal protein of 41 kDa B (cep41-b).